The chain runs to 564 residues: NAD-dependent malic enzyme (564 aa).

Residue Tyr-102 is the Proton donor of the active site. Arg-155 provides a ligand contact to NAD(+). Lys-173 functions as the Proton acceptor in the catalytic mechanism. A divalent metal cation is bound by residues Glu-244, Asp-245, and Asp-268. NAD(+) contacts are provided by Asp-268 and Asn-417.

It belongs to the malic enzymes family. As to quaternary structure, homotetramer. The cofactor is Mg(2+). Mn(2+) serves as cofactor.

The catalysed reaction is (S)-malate + NAD(+) = pyruvate + CO2 + NADH. The enzyme catalyses oxaloacetate + H(+) = pyruvate + CO2. This Pseudomonas aeruginosa (strain LESB58) protein is NAD-dependent malic enzyme.